Reading from the N-terminus, the 95-residue chain is Large ribosomal subunit protein bL25 (95 aa).

It belongs to the bacterial ribosomal protein bL25 family. Part of the 50S ribosomal subunit; part of the 5S rRNA/L5/L18/L25 subcomplex. Contacts the 5S rRNA. Binds to the 5S rRNA independently of L5 and L18.

In terms of biological role, this is one of the proteins that binds to the 5S RNA in the ribosome where it forms part of the central protuberance. In Shewanella sp. (strain ANA-3), this protein is Large ribosomal subunit protein bL25.